The chain runs to 144 residues: Thyrostimulin alpha-2 subunit (144 aa).

The N-terminal stretch at Met1–Gly41 is a signal peptide. 4 disulfide bridges follow: Cys52/Cys107, Cys66/Cys121, Cys76/Cys136, and Cys80/Cys138.

The protein belongs to the glycoprotein hormones subunit alpha family. In terms of assembly, heterodimer with GPHB5; non-covalently-linked. As to expression, expressed by the venom duct.

Its subcellular location is the secreted. The protein is Thyrostimulin alpha-2 subunit of Conus victoriae (Queen Victoria cone).